The following is a 674-amino-acid chain: CLK4-associating serine/arginine rich protein (674 aa).

The residue at position 101 (S101) is a Phosphoserine. 2 disordered regions span residues 171 to 232 and 258 to 674; these read TVAE…GMAD and EKAM…HYRH. The span at 182–214 shows a compositional bias: acidic residues; that stretch reads PEEEESAAEEESNSDEDEVIPDIDVEVDVDELN. Positions 265–283 are enriched in basic residues; the sequence is RRSRRQRREFREKRLRGRK. A phosphoserine mark is found at S285 and S294. The span at 290-313 shows a compositional bias: basic and acidic residues; the sequence is ARRDSPTYDPYKRSPSESSSESRS. Phosphothreonine is present on T327. S331 and S335 each carry phosphoserine. Pro residues predominate over residues 356-365; sequence PPAPPQPGGP. The segment covering 378 to 399 has biased composition (low complexity); it reads SSSSSSSSASRTSSSRSSSRSS. 2 stretches are compositionally biased toward basic residues: residues 411-443 and 481-492; these read SGRH…RRHS and RGGRGLRHHSSS. Composition is skewed to low complexity over residues 493-506 and 514-532; these read RSRS…SRSR and HSPS…SQSP. At S547 the chain carries Phosphoserine. T573 carries the post-translational modification Phosphothreonine. Residues 585 to 647 are a coiled coil; it reads ALNRQFKADK…ERQYSRQSRS (63 aa). 2 stretches are compositionally biased toward basic and acidic residues: residues 590 to 617 and 625 to 641; these read FKAD…ELRA and KERE…ERQY. Over residues 642-651 the composition is skewed to low complexity; that stretch reads SRQSRSPSPR. Residues 659 to 674 are compositionally biased toward basic residues; sequence SRRRSRSRSRSPHYRH.

It belongs to the splicing factor SR family. In terms of assembly, probably interacts with CLK4. Post-translationally, phosphorylated in vitro by CLK4.

It is found in the nucleus. Probably functions as an alternative splicing regulator. May regulate the mRNA splicing of genes such as CLK1. May act by regulating members of the CLK kinase family. The chain is CLK4-associating serine/arginine rich protein (CLASRP) from Homo sapiens (Human).